The primary structure comprises 156 residues: 2-C-methyl-D-erythritol 2,4-cyclodiphosphate synthase (156 aa).

2 residues coordinate a divalent metal cation: Asp9 and His11. 4-CDP-2-C-methyl-D-erythritol 2-phosphate is bound by residues 9-11 (DAH) and 36-37 (HS). Residue His44 coordinates a divalent metal cation. 4-CDP-2-C-methyl-D-erythritol 2-phosphate is bound at residue 58-60 (NIG).

The protein belongs to the IspF family. Homotrimer. A divalent metal cation serves as cofactor.

The catalysed reaction is 4-CDP-2-C-methyl-D-erythritol 2-phosphate = 2-C-methyl-D-erythritol 2,4-cyclic diphosphate + CMP. The protein operates within isoprenoid biosynthesis; isopentenyl diphosphate biosynthesis via DXP pathway; isopentenyl diphosphate from 1-deoxy-D-xylulose 5-phosphate: step 4/6. Involved in the biosynthesis of isopentenyl diphosphate (IPP) and dimethylallyl diphosphate (DMAPP), two major building blocks of isoprenoid compounds. Catalyzes the conversion of 4-diphosphocytidyl-2-C-methyl-D-erythritol 2-phosphate (CDP-ME2P) to 2-C-methyl-D-erythritol 2,4-cyclodiphosphate (ME-CPP) with a corresponding release of cytidine 5-monophosphate (CMP). The protein is 2-C-methyl-D-erythritol 2,4-cyclodiphosphate synthase of Kosmotoga olearia (strain ATCC BAA-1733 / DSM 21960 / TBF 19.5.1).